A 167-amino-acid polypeptide reads, in one-letter code: Translationally-controlled tumor protein homolog (167 aa).

Residues 1-167 enclose the TCTP domain; the sequence is MIIFKDVISN…WKHGIKEEKI (167 aa).

Belongs to the TCTP family.

Its subcellular location is the cytoplasm. The protein resides in the cytoskeleton. Its function is as follows. Involved in protein synthesis. Involved in microtubule stabilization. This is Translationally-controlled tumor protein homolog from Yarrowia lipolytica (strain CLIB 122 / E 150) (Yeast).